We begin with the raw amino-acid sequence, 402 residues long: Protein indeterminate-domain 12 (402 aa).

Residues 47 to 66 (TETHKPKKKRGLPGNPDPDA) form a disordered region. S72 carries the phosphoserine modification. 2 consecutive C2H2-type zinc fingers follow at residues 82–104 (FVCEICNKGFQRDQNLQLHRRGH) and 124–154 (YVCPETNCAHHHPSRALGDLTGIKKHFCRKH). Positions 146–153 (IKKHFCRK) match the Nuclear localization signal motif. The C2H2-type 2; degenerate zinc-finger motif lies at 159 to 183 (WKCEKCSKFYAVQSDWKAHTKICGT). Residues C161, C164, H177, C181, C188, C190, H203, and C207 each contribute to the Zn(2+) site. The CCHC-type 2; atypical zinc finger occupies 186–209 (YRCDCGTLFSRKDTFITHRAFCDA). Residues 196–208 (RKDTFITHRAFCD) are SHR-binding.

The protein localises to the nucleus. In terms of biological role, probable transcription factor. The sequence is that of Protein indeterminate-domain 12 from Arabidopsis thaliana (Mouse-ear cress).